The chain runs to 225 residues: Respiratory nitrate reductase 1 gamma chain (225 aa).

Methionine 1 carries the N-formylmethionine modification. The Periplasmic segment spans residues methionine 1–phenylalanine 3. A helical membrane pass occupies residues leucine 4–aspartate 29. The Cytoplasmic portion of the chain corresponds to tyrosine 30–glycine 47. The helical transmembrane segment at methionine 48–methionine 70 threads the bilayer. Heme b is bound by residues histidine 56 and histidine 66. The Periplasmic segment spans residues leucine 71 to proline 82. The chain crosses the membrane as a helical span at residues isoleucine 83–arginine 112. The Cytoplasmic segment spans residues leucine 113–glycine 124. A helical transmembrane segment spans residues alanine 125–alanine 148. Topologically, residues glutamine 149–phenylalanine 182 are periplasmic. The chain crosses the membrane as a helical span at residues isoleucine 183–phenylalanine 198. Histidine 187 and histidine 205 together coordinate heme b. Over proline 199–histidine 225 the chain is Cytoplasmic.

As to quaternary structure, dimer of heterotrimers each composed of an alpha, a beta and a gamma chain. Alpha and beta are catalytic chains; gamma chains are involved in binding the enzyme complex to the cytoplasmic membrane. It depends on heme as a cofactor.

The protein resides in the cell inner membrane. The catalysed reaction is nitrate + a quinol = a quinone + nitrite + H2O. In terms of biological role, the nitrate reductase enzyme complex allows E.coli to use nitrate as an electron acceptor during anaerobic growth. The gamma chain is a membrane-embedded heme-iron unit resembling cytochrome b, which transfers electrons from quinones to the beta subunit. The chain is Respiratory nitrate reductase 1 gamma chain (narI) from Escherichia coli (strain K12).